The primary structure comprises 1491 residues: Copper-transporting ATPase 1 (1491 aa).

Residues 1–644 (MEPSVDANSI…KREIKQWRGS (644 aa)) are Cytoplasmic-facing. HMA domains are found at residues 8–74 (NSIT…FDAL) and 85–151 (TNTV…LDMG). Cu(+) contacts are provided by Thr18, Cys19, and Cys22. Residue Thr152 is modified to Phosphothreonine. Positions 171 to 237 (VMLKMKVEGM…QIEAVGFPAF (67 aa)) constitute an HMA 3 domain. Cu(+) contacts are provided by Cys182 and Cys185. Ser270 carries the phosphoserine modification. Positions 277 to 343 (STTMFTIEGM…AIEAISPGQY (67 aa)) constitute an HMA 4 domain. The Cu(+) site is built by Cys288 and Cys291. At Thr327 the chain carries Phosphothreonine. A phosphoserine mark is found at Ser339, Ser353, Ser357, and Ser362. HMA domains follow at residues 377-443 (QEAV…FDAA), 479-545 (NKCY…FGAM), and 555-621 (GILE…FEAS). Cu(+)-binding residues include Cys388, Cys391, Cys490, Cys493, Cys566, and Cys569. The chain crosses the membrane as a helical span at residues 645–666 (FLVSLFFCIPVMGLMVYMMVMD). Topologically, residues 667 to 705 (HHLATLHHNQNMSNEEMINMHSAMFLERQILPGLSIMNL) are extracellular. N-linked (GlcNAc...) asparagine glycosylation occurs at Asn677. A helical membrane pass occupies residues 706–725 (LSLLLCLPVQFCGGWYFYIQ). The Cytoplasmic portion of the chain corresponds to 726 to 732 (AYKALKH). A helical transmembrane segment spans residues 733-753 (KTANMDVLIVLATTIAFAYSL). At 754 to 772 (VILLVAMFERAKVNPITFF) the chain is on the extracellular side. A helical membrane pass occupies residues 773–793 (DTPPMLFVFIALGRWLEHIAK). Over 794-926 (GKTSEALAKL…SKAPIQQFAD (133 aa)) the chain is Cytoplasmic. Residues 927–950 (KLSGYFVPFIVLVSIVTLLVWIII) form a helical membrane-spanning segment. At 951 to 980 (GFQNFEIVETYFPGYNRSISRTETIIRFAF) the chain is on the extracellular side. An N-linked (GlcNAc...) asparagine glycan is attached at Asn966. Residues 981–1002 (QASITVLCIACPCSLGLATPTA) form a helical membrane-spanning segment. Residues 1003 to 1347 (VMVGTGVGAQ…LSRKTVKRIR (345 aa)) are Cytoplasmic-facing. Catalysis depends on Asp1035, which acts as the 4-aspartylphosphate intermediate. An ATP-binding site is contributed by Glu1072. At Thr1203 the chain carries Phosphothreonine. Residues Asp1292 and Asp1296 each contribute to the Mg(2+) site. Residues 1348–1365 (INFVFALIYNLVGIPIAA) traverse the membrane as a helical segment. Residues 1366-1376 (GVFLPIGLVLQ) are Extracellular-facing. The helical transmembrane segment at 1377 to 1396 (PWMGSAAMAASSVSVVLSSL) threads the bilayer. At 1397–1491 (FLKLYRKPTY…DFREDDDTTL (95 aa)) the chain is on the cytoplasmic side. 5 positions are modified to phosphoserine: Ser1421, Ser1423, Ser1451, Ser1454, and Ser1457. The Endocytosis signal motif lies at 1458-1459 (LL). Phosphoserine occurs at positions 1460, 1464, 1467, and 1477. The interval 1477–1491 (SLLVGDFREDDDTTL) is PDZD11-binding. The Endocytosis signal motif lies at 1478-1479 (LL).

It belongs to the cation transport ATPase (P-type) (TC 3.A.3) family. Type IB subfamily. As to quaternary structure, monomer. Interacts with PDZD11. Interacts with ATOX1 and COMMD1. Interacts with TYRP1. Directly interacts with SOD3; this interaction is copper-dependent and is required for SOD3 activity. In terms of tissue distribution, widely expressed. Highly expressed in pituitary endocrine cells. Expressed in melanocytes (at protein level). Expressed in motor neuron (at protein level). Expressed in hippocampal neuron (at protein level). In the kidney, it is detected in the proximal and distal tubules (at protein level). Expressed in aorta (at protein level).

It localises to the golgi apparatus. The protein localises to the trans-Golgi network membrane. The protein resides in the cell membrane. Its subcellular location is the melanosome membrane. It is found in the early endosome membrane. It localises to the cell projection. The protein localises to the axon. The protein resides in the dendrite. Its subcellular location is the postsynaptic density. The enzyme catalyses Cu(+)(in) + ATP + H2O = Cu(+)(out) + ADP + phosphate + H(+). Functionally, ATP-driven copper (Cu(+)) ion pump that plays an important role in intracellular copper ion homeostasis. Within a catalytic cycle, acquires Cu(+) ion from donor protein on the cytoplasmic side of the membrane and delivers it to acceptor protein on the lumenal side. The transfer of Cu(+) ion across the membrane is coupled to ATP hydrolysis and is associated with a transient phosphorylation that shifts the pump conformation from inward-facing to outward-facing state. Under physiological conditions, at low cytosolic copper concentration, it is localized at the trans-Golgi network (TGN) where it transfers Cu(+) ions to cuproenzymes of the secretory pathway. Upon elevated cytosolic copper concentrations, it relocalizes to the plasma membrane where it is responsible for the export of excess Cu(+) ions. May play a dual role in neuron function and survival by regulating cooper efflux and neuronal transmission at the synapse as well as by supplying Cu(+) ions to enzymes such as PAM, TYR and SOD3. In the melanosomes of pigmented cells, provides copper cofactor to TYR to form an active TYR holoenzyme for melanin biosynthesis. In Mus musculus (Mouse), this protein is Copper-transporting ATPase 1.